Consider the following 387-residue polypeptide: F-box/LRR-repeat/kelch-repeat protein At2g29770 (387 aa).

Positions 1-34 (MVFISETSDDGSNGGDPTKNPQEEEEENLPPIPQ) are disordered. The F-box domain occupies 31 to 78 (PIPQGIPDELIESTVLLIRRCHYPTLSLLSKTFRRVISSSELYKSRFI). The LRR 1 repeat unit spans residues 105-128 (CNIPRNISLHLREIKSLPPLNHGS). 2 Kelch repeats span residues 136-183 (HMYV…VIDG) and 184-231 (RIYV…FVTS). The LRR 2 repeat unit spans residues 196 to 219 (DHWIEVFDIENRIWSSVPHHRYCN).

The sequence is that of F-box/LRR-repeat/kelch-repeat protein At2g29770 from Arabidopsis thaliana (Mouse-ear cress).